A 245-amino-acid polypeptide reads, in one-letter code: MASPSRRLQTKPVITCFKSVLLIYTFIFWITGVILLAVGIWGKVSLENYFSLLNEKATNVPFVLIATGTVIILLGTFGCFATCRASAWMLKLYAMFLTLIFLVELVAAIVGFVFRHEIKNSFKNNYEKALKQYNSTGDYRSHAVDKIQNTLHCCGVTDYRDWTDTNYYSEKGFPKSCCKLEDCTPQRDADKVNNEGCFIKVMTIIESEMGVVAGISFGVACFQLIGIFLAYCLSRAITNNQYEIV.

Over 1–19 (MASPSRRLQTKPVITCFKS) the chain is Cytoplasmic. A helical transmembrane segment spans residues 20-40 (VLLIYTFIFWITGVILLAVGI). At 41-59 (WGKVSLENYFSLLNEKATN) the chain is on the extracellular side. Residues 60 to 80 (VPFVLIATGTVIILLGTFGCF) traverse the membrane as a helical segment. The Cytoplasmic portion of the chain corresponds to 81 to 93 (ATCRASAWMLKLY). Residues 94-114 (AMFLTLIFLVELVAAIVGFVF) form a helical membrane-spanning segment. Residues 115–208 (RHEIKNSFKN…IKVMTIIESE (94 aa)) are Extracellular-facing. N-linked (GlcNAc...) asparagine glycosylation occurs at asparagine 134. Residues 209–229 (MGVVAGISFGVACFQLIGIFL) form a helical membrane-spanning segment. The Cytoplasmic segment spans residues 230 to 245 (AYCLSRAITNNQYEIV).

This sequence belongs to the tetraspanin (TM4SF) family.

The protein resides in the membrane. This is Tetraspanin-6 (TSPAN6) from Pongo abelii (Sumatran orangutan).